Reading from the N-terminus, the 818-residue chain is Exchange factor for Arf-6 (818 aa).

Disordered stretches follow at residues 92 to 123, 137 to 168, 208 to 291, and 326 to 383; these read AQKLSRLPVPVSTSQIERRGSLARKTSEESSP, MESTDVEESEEETVMMTTDEKENQKKPNENDD, NHHH…GVSN, and RTTP…VGGE. The span at 107 to 119 shows a compositional bias: basic and acidic residues; it reads IERRGSLARKTSE. Acidic residues predominate over residues 140 to 149; that stretch reads TDVEESEEET. A compositionally biased stretch (basic and acidic residues) spans 154 to 165; sequence TDEKENQKKPNE. Polar residues-rich tracts occupy residues 213–223 and 255–269; these read YNSSPQISTLS and MSNNSHQQSFRSPEN. Low complexity predominate over residues 326–347; sequence RTTPNTAASNSSASASPSLHAT. An SEC7 domain is found at 356-532; it reads GVSLRSAESS…KTLFQSIKDN (177 aa). A compositionally biased stretch (polar residues) spans 361-380; it reads SAESSNLNQTAVPSTSTNSV. In terms of domain architecture, PH spans 569-681; that stretch reads VEYYSGFLMR…WCEKINFVAA (113 aa). Positions 782 to 799 are enriched in polar residues; sequence TMNIMMTPTRRQQQNQKP. The disordered stretch occupies residues 782-818; sequence TMNIMMTPTRRQQQNQKPVVSEDRLSYTDAVNGAAAH.

In terms of assembly, interacts (via short N-terminal region) with microtubule-associated proteins tac-1 and zyg-8.

It localises to the cytoplasm. The protein localises to the cell cortex. The protein resides in the cell membrane. Functionally, guanine nucleotide exchange factor for arf-6. Involved in response to injury in mechanosensory neurons. Inhibits axon regrowth via microtubule dynamics, possibly by inducing axonal microtubule catastrophes. Limits microtubule growth near the cellular cortex of early embryonic cells. The sequence is that of Exchange factor for Arf-6 from Caenorhabditis elegans.